The primary structure comprises 58 residues: Small ribosomal subunit protein bS21 (58 aa).

The interval 34 to 58 (KREHYEKPSVKRKKKSEAARKRKFK) is disordered. Basic residues predominate over residues 43 to 58 (VKRKKKSEAARKRKFK).

This sequence belongs to the bacterial ribosomal protein bS21 family.

The protein is Small ribosomal subunit protein bS21 of Clostridium acetobutylicum (strain ATCC 824 / DSM 792 / JCM 1419 / IAM 19013 / LMG 5710 / NBRC 13948 / NRRL B-527 / VKM B-1787 / 2291 / W).